The sequence spans 142 residues: Mitochondrial import receptor subunit TOM22 homolog (142 aa).

The span at 1–18 (MAAAVAAAGAGEPLSPEE) shows a compositional bias: low complexity. The interval 1–41 (MAAAVAAAGAGEPLSPEELLPKAEAEKAEEELEEDDDDELD) is disordered. Residue Ala2 is modified to N-acetylalanine. Over 2–83 (AAAVAAAGAG…AQKMYRFSRA (82 aa)) the chain is Cytoplasmic. A Phosphoserine modification is found at Ser15. A compositionally biased stretch (acidic residues) spans 27–41 (KAEEELEEDDDDELD). The tract at residues 41 to 50 (DETLSERLWG) is import sequence; necessary for mitochondrion outer membrane localization and integration in the TOM complex. Thr43 carries the phosphothreonine modification. Residue Ser45 is modified to Phosphoserine. Residues 83 to 103 (AALWIGTTSFMILVLPVVFET) are TMD; necessary for mitochondrion outer membrane localization and integration in the TOM complex. A helical transmembrane segment spans residues 84–103 (ALWIGTTSFMILVLPVVFET). Over 104–142 (EKLQMEQQQQLQQRQILLGPNTGLSGGMPGALPPLPGKM) the chain is Mitochondrial intermembrane. The tract at residues 123–142 (PNTGLSGGMPGALPPLPGKM) is C-tail signal; necessary for mitochondrion outer membrane localization and integration in the TOM complex.

Belongs to the Tom22 family. In terms of assembly, forms part of the preprotein translocase complex of the outer mitochondrial membrane (TOM complex) which consists of at least 7 different proteins (TOMM5, TOMM6, TOMM7, TOMM20, TOMM22, TOMM40 and TOMM70). Interacts with PPP2R2B and TOMM40.

Its subcellular location is the mitochondrion outer membrane. In terms of biological role, central receptor component of the translocase of the outer membrane of mitochondria (TOM complex) responsible for the recognition and translocation of cytosolically synthesized mitochondrial preproteins. Together with the peripheral receptor TOM20 functions as the transit peptide receptor and facilitates the movement of preproteins into the translocation pore. Required for the translocation across the mitochondrial outer membrane of cytochrome P450 monooxygenases. This Mus musculus (Mouse) protein is Mitochondrial import receptor subunit TOM22 homolog (Tomm22).